Here is a 757-residue protein sequence, read N- to C-terminus: Dynamin-related protein DNM1 (757 aa).

Positions 25 to 333 (TLDLPILAVV…LLSHIRDKLP (309 aa)) constitute a Dynamin-type G domain. The interval 35-42 (GSQSSGKS) is G1 motif. 35–42 (GSQSSGKS) is a binding site for GTP. The interval 61-63 (VTR) is G2 motif. Residues 175 to 178 (DLPG) form a G3 motif region. GTP-binding positions include 175-179 (DLPGI) and 244-247 (TKLD). The tract at residues 244 to 247 (TKLD) is G4 motif. The tract at residues 274 to 277 (VNRS) is G5 motif. The disordered stretch occupies residues 557-597 (SKLSQQENGQTNGINGTSSISSNIDQDSAKNSDYDDDGIDA). Over residues 567–580 (TNGINGTSSISSNI) the composition is skewed to low complexity. Ser-629 is subject to Phosphoserine. The 88-residue stretch at 670-757 (CELIKRLIVS…KAATLISNIL (88 aa)) folds into the GED domain.

It belongs to the TRAFAC class dynamin-like GTPase superfamily. Dynamin/Fzo/YdjA family. Interacts with FIS1 and MDV1.

It localises to the mitochondrion outer membrane. The catalysed reaction is GTP + H2O = GDP + phosphate + H(+). In terms of biological role, microtubule-associated force-producing protein that participates mitochondrial fission. Fission of mitochondria occurs in many cell types and constitutes an important step in mitochondria morphology, which is balanced between fusion and fission. Functions antagonistically with FZO1. This chain is Dynamin-related protein DNM1 (DNM1), found in Saccharomyces cerevisiae (strain ATCC 204508 / S288c) (Baker's yeast).